The primary structure comprises 124 residues: Urease subunit beta (124 aa).

The protein belongs to the urease beta subunit family. In terms of assembly, heterotrimer of UreA (gamma), UreB (beta) and UreC (alpha) subunits. Three heterotrimers associate to form the active enzyme.

The protein localises to the cytoplasm. It carries out the reaction urea + 2 H2O + H(+) = hydrogencarbonate + 2 NH4(+). Its pathway is nitrogen metabolism; urea degradation; CO(2) and NH(3) from urea (urease route): step 1/1. This Bacillus subtilis (strain 168) protein is Urease subunit beta.